Here is an 88-residue protein sequence, read N- to C-terminus: Small ribosomal subunit protein bS20 (88 aa).

A disordered region spans residues 1 to 27; that stretch reads MANSKSAKKRALQSEKRRQHNASRRSM.

This sequence belongs to the bacterial ribosomal protein bS20 family.

Binds directly to 16S ribosomal RNA. The protein is Small ribosomal subunit protein bS20 of Shewanella loihica (strain ATCC BAA-1088 / PV-4).